The primary structure comprises 117 residues: Large ribosomal subunit protein uL18 (117 aa).

The protein belongs to the universal ribosomal protein uL18 family. Part of the 50S ribosomal subunit; part of the 5S rRNA/L5/L18/L25 subcomplex. Contacts the 5S and 23S rRNAs.

Its function is as follows. This is one of the proteins that bind and probably mediate the attachment of the 5S RNA into the large ribosomal subunit, where it forms part of the central protuberance. This Phytoplasma australiense protein is Large ribosomal subunit protein uL18.